Reading from the N-terminus, the 5495-residue chain is Microtubule-associated protein futsch (5495 aa).

Disordered regions lie at residues 1–97 (MGDQ…DADG), 656–975 (AKAD…LKEE), 988–1074 (RDEM…AEEE), 1086–1111 (ERKARLEGASARQDESELDVEPEQSK), 1128–1167 (KSRTEEQLAKPAEEELSSPTPEEKLSKKTSDTKDDQIGAP), 1185–1204 (SATIESGATTAPTLPEDERI), 1255–1275 (KDAPKDANAEALGELPDSGER), 1306–1358 (HEEA…EPNK), 1402–1840 (NQED…VVES), 1866–2631 (EIGK…PGFV), 2709–2810 (AKTV…KDFA), 2830–4166 (LPTL…DLSL), 4196–4230 (KAESSPRPAVLSKPAEFSQPDTGHTASTPVDEASP), 4362–4612 (IIPD…ASQL), 4636–4668 (AQKSNKEIKDARETKVTSQFTTTTSSATKDDSL), 4687–4975 (AFST…QMLA), 5035–5065 (KTVTTTDSSEPDSEKVVVTTTRTTSESERDQ), 5101–5138 (SYELQHSSSGVSKRSDLDADGDESQDDIPPQYGSEEHS), 5170–5199 (PSTEPIPIQGAPSGDSQSSESVESSSQTWA), and 5328–5350 (GLPSPAPLPVEGGADIRTTPKKE). The segment covering 35–48 (AKGAGDGPAQDAAQ) has biased composition (low complexity). 3 stretches are compositionally biased toward basic and acidic residues: residues 656 to 672 (AKADSMDTDAEPEHEAD), 696 to 716 (EPEHEPEAEQDKDVGEEKKVE), and 758 to 795 (GKADKPRAEVKPVVRSRIDTKPPKSMDRKLAKRDEKKS). Low complexity-rich tracts occupy residues 797–806 (PTTTPAARAP) and 819–831 (PATKSSPSSTPAK). A compositionally biased stretch (basic and acidic residues) spans 832–843 (SAKEANNRKVLE). Residues 850–888 (RVQATSTVSRRVTSTASERRVQQQAEAKTAATGATQATQ) are compositionally biased toward low complexity. Residues 918-931 (KAADLKKTRLDKGG) show a composition bias toward basic and acidic residues. Residues 932 to 942 (TTDSSLVSTPS) show a composition bias toward polar residues. Basic and acidic residues-rich tracts occupy residues 962 to 975 (DAEKQRELDDLKEE) and 988 to 1007 (RDEMKRQQHQQIKAELREMP). A compositionally biased stretch (acidic residues) spans 1012–1041 (GDGENEPDEEEEYLIIEKEEVEQYTEDSIV). Over residues 1047–1065 (MTKEEEIQKHQRDSQESEK) the composition is skewed to basic and acidic residues. Basic and acidic residues-rich tracts occupy residues 1128–1140 (KSRTEEQLAKPAE) and 1148–1163 (PEEKLSKKTSDTKDDQ). The span at 1187-1196 (TIESGATTAP) shows a compositional bias: polar residues. Composition is skewed to basic and acidic residues over residues 1306 to 1319 (HEEADLGLYEKDSQ), 1327 to 1337 (SHKEESAKEEK), 1343 to 1358 (KENKVGEIELGDEPNK), and 1408 to 1443 (EQVKDKEEHEQKIESGIITEKEAKKSASTPEEKETS). A run of 2 repeats spans residues 1469 to 1502 (REDTGSIESPPTIEEAIEVEVQAKQEAQKPVPAP) and 1513 to 1539 (LASKETSRPESATGSVKEDTEQTKSKK). The tract at residues 1469–4032 (REDTGSIESP…SPLASKESSR (2564 aa)) is 53 X approximate repeat. Composition is skewed to basic and acidic residues over residues 1546 to 1555 (PESEAKDKKS), 1571 to 1663 (SVKD…DEKS), 1679 to 1696 (SVKDETEKSKEPSRRESI), 1718 to 1732 (GIKDESAKPESRRDS), and 1748 to 1779 (SVKDEPIKSTEKSRRESVAESFKADSTKDEKS). A run of 17 repeats spans residues 1622 to 1649 (KSALASKEASRPESVTDKSKEPSRRESI), 1660 to 1686 (DEKSAPPSKEASRPGSVVESVKDETEK), 1690 to 1718 (PSRRESIAESAKPPIEFREVSRPESVIDG), 1755 to 1782 (KSTEKSRRESVAESFKADSTKDEKSPLT), 1790 to 1818 (ESAVENVMDAVGSAERSQPESVTASRDVS), 1837 to 1865 (VVESVIPASDVVEIEKGAADKEKGVFVSL), 1874 to 1902 (SEVISRPGPVVESVKPESRRESSTEIVLP), 1911 to 1939 (PSRPESKVECLKDESEVLKGSTRRESVAE), 1948 to 1976 (KETSRPESAVGSMKDESMSKEPSRRESVK), 1985 to 2013 (TSRPASVAESAKDGADDLKELSRPESTTQ), 2022 to 2050 (DEKSPLASEEASRPASVAESVKDEAEKSK), 2059 to 2087 (AEKSPLPSKEASRPASVAESIKDEAEKSK), 2096 to 2124 (AEKSPLPSKEASRPASVAESIKDEAEKSK), 2133 to 2161 (AEKSPLPSKEASRPASVAESIKDEAEKSK), 2170 to 2198 (AEKSPLPSKEASRPASVAESIKDEAEKSK), 2215 to 2243 (KEASRPASVAESIKDEAEKSKEESRRESV), and 2262 to 2292 (ESIKDEAEKSKEESRRESVAEKSPLPSKEAS). Positions 1804–1815 (ERSQPESVTASR) are enriched in polar residues. Basic and acidic residues-rich tracts occupy residues 1887 to 1896 (VKPESRRESS), 1904 to 1942 (HAEDSKEPSRPESKVECLKDESEVLKGSTRRESVAESDK), 1960 to 1976 (MKDESMSKEPSRRESVK), 1994 to 2007 (SAKDGADDLKELSR), 2041 to 2059 (SVKDEAEKSKEESRRESVA), 2078 to 2096 (SIKDEAEKSKEESRRESVA), 2115 to 2133 (SIKDEAEKSKEESRRESVA), 2152 to 2170 (SIKDEAEKSKEESRRESVA), 2189 to 2207 (SIKDEAEKSKEESRRESVA), 2226 to 2244 (SIKDEAEKSKEESRRESVA), 2263 to 2281 (SIKDEAEKSKEESRRESVA), 2300 to 2318 (SIKDEAEKSKEETRRESVA), 2337 to 2355 (SIKDEAEKSKEESRRESAA), 2374 to 2391 (SVKDEADKSKEESRRESM), 2419 to 2435 (SVKDDPVKSKEPSRRES), 2466 to 2482 (SVKDEAEKQESRRESKT), 2560 to 2588 (IKYDLDKPQIIKDDKSTEHSRRESLEDKS), and 2604 to 2627 (SDHEAAVAIEDDAKSSISPKDKSR). Repeat unit 20 spans residues 2355-2391 (AEKSPLPSKEASRPASVAESVKDEADKSKEESRRESM). Repeat copies occupy residues 2703–2726 (LAQIGAAKTVSSPLDEALRTPSAP) and 2761–2787 (WVAESKDDAAQLKSSVEDLRSPVASTE). Residues 2764 to 2780 (ESKDDAAQLKSSVEDLR) show a composition bias toward basic and acidic residues. Residue Ser-2800 is modified to Phosphoserine; by GSK3-beta. A run of 3 repeats spans residues 2820–2846 (LPLTIELKGNLPTLSSPVDVAHGDFPQ), 2864–2892 (LSKVDIEKTASSPIDEAPKSLIGCPAEER), and 2907–2933 (VEKSKDASRPPSVVESTKADSTKGDIS). The span at 2845–2861 (PQTSTPTSSPTVASVQP) shows a compositional bias: low complexity. 2 stretches are compositionally biased toward basic and acidic residues: residues 2889–2914 (AEERPESPAESAKDAAESVEKSKDAS) and 2942–2954 (GPKDDVEKSKESS). Positions 2955-2966 (RPPSVSASITGD) are enriched in polar residues. A run of 28 repeats spans residues 2956–2987 (PPSVSASITGDSTKDVSRPASVVESVKDEHDK), 3006–3034 (GKSDSKSSSQDSQKDEKSTLASKEASRRE), 3049–3075 (SRPESVIASGEPVPRESKSPLDSKDTS), 3089–3117 (EKSEQQSRRESVAESVKADTKKDGKSQEA), 3131–3158 (DEKQESRRQSITGSHKAMSTMGDESPMD), 3200–3224 (KSDITKGEKSPLPSKEVSRPESVVG), 3228–3256 (DEKAESRRESVAESVKPESSKDATSAPPS), 3265–3293 (VLGSLKDEGDKTTSRRVSVADSIKDEKSL), 3302–3330 (PESEAESLKDAAAPSQETSRPESVTESVK), 3339–3367 (KEASRPASVAENAKDSADESKEQRPESLP), 3376–3404 (DEKSPLASKDEAEKSKEESRRESVAEQFP), 3413–3441 (PASVAESVKDEAEKSKEESPLMSKEASRP), 3450–3478 (DEAEKSKEESRRESVAEKSPLPSKEASRP), 3487–3515 (DEADKSKEESRRESGAEKSPLASKEASRP), 3524–3552 (DEAEKSKEESRRESVAEKSPLPSKEASRP), 3561–3589 (DEAEKSKEESRRDSVAEKSPLASKEASRP), 3598–3626 (DEAEKSKEESRRESVAEKSPLASKEASRP), 3635–3663 (DEAEKSKEESRRESVAEKSPLASKEASRP), 3672–3700 (DEAEKSKEESSRDSVAEKSPLASKEASRP), 3709–3737 (DEAEKSKEESRRESVAEKSPLASKEASRP), 3746–3774 (DDAEKSKEESRRESVAEKSPLASKEASRP), 3783–3811 (DEAEKSKEESRRESVAEKSPLPSKEASRP), 3820–3848 (DEAEKSKEESRRESVAEKSSLASKKASRP), 3867–3894 (RRESVAEKSPLASKEASRPASVAESVKD), 3895–3921 (EAEKSKEESRRESVAEKSPLPSKEASR), 3931–3958 (DEADKSKEESRRESGAEKSPLASMEASR), 3968–3995 (DETEKSKEESRRESVTEKSPLPSKEASR), and 4005–4032 (DEAEKSKEESRRESVAEKSPLASKESSR). 7 stretches are compositionally biased toward basic and acidic residues: residues 2980-2996 (SVKDEHDKAESRRESIA), 3017-3051 (SQKDEKSTLASKEASRRESVVESSKDDAEKSESRP), 3061-3075 (VPRESKSPLDSKDTS), 3087-3116 (EDEKSEQQSRRESVAESVKADTKKDGKSQE), 3156-3168 (PMDKADKSKEPSR), 3175-3208 (SIKHENTKDEESPLGSRRDSVAESIKSDITKGEK), and 3226-3248 (IKDEKAESRRESVAESVKPESSK). Ser-3067, Ser-3071, and Ser-3075 each carry phosphoserine. Over residues 3300–3310 (SRPESEAESLK) the composition is skewed to basic and acidic residues. A compositionally biased stretch (polar residues) spans 3316 to 3327 (SQETSRPESVTE). 14 stretches are compositionally biased toward basic and acidic residues: residues 3350 to 3363 (NAKDSADESKEQRP), 3373 to 3399 (SIKDEKSPLASKDEAEKSKEESRRESV), 3419 to 3431 (SVKDEAEKSKEES), 3448 to 3465 (VKDEAEKSKEESRRESVA), 3484 to 3502 (SVKDEADKSKEESRRESGA), 3521 to 3539 (SIKDEAEKSKEESRRESVA), 3558 to 3576 (SVKDEAEKSKEESRRDSVA), 3599 to 3613 (EAEKSKEESRRESVA), 3632 to 3650 (SIKDEAEKSKEESRRESVA), 3669 to 3687 (SVKDEAEKSKEESSRDSVA), 3710 to 3724 (EAEKSKEESRRESVA), 3743 to 3761 (SVKDDAEKSKEESRRESVA), 3780 to 3798 (SVKDEAEKSKEESRRESVA), and 3817 to 3835 (SVKDEAEKSKEESRRESVA). Over residues 3836 to 3850 (EKSSLASKKASRPAS) the composition is skewed to low complexity. Composition is skewed to basic and acidic residues over residues 3854–3872 (SVKDEAEKSKEESRRESVA), 3891–3909 (SVKDEAEKSKEESRRESVA), 3928–3946 (SVKDEADKSKEESRRESGA), 3965–3983 (SVKDETEKSKEESRRESVT), 4002–4020 (SVKDEAEKSKEESRRESVA), 4039–4066 (SIKDEAEGTKQESRRESMPESGKAESIK), 4086–4095 (SVKDETEKPE), and 4115–4141 (AKDEKSPLHSRPESVADKSPDASKEAS). Composition is skewed to polar residues over residues 4142–4152 (RSLSVAETASS) and 4214–4223 (QPDTGHTAST). Composition is skewed to basic and acidic residues over residues 4362 to 4379 (IIPDFDERQLEEKLKSTA), 4386 to 4410 (DKSTRDEKSLEISVKVEIESEKSSP), and 4419 to 4432 (IEEKDKIEQSEKAQ). Over residues 4443–4461 (PESVASQPESVPSPSQSAA) the composition is skewed to low complexity. Residues 4462–4481 (SHEHKEVELSESHKAEKSSR) are compositionally biased toward basic and acidic residues. A compositionally biased stretch (polar residues) spans 4498-4508 (RPASSTSQFST). Over residues 4517 to 4528 (ESLLHSLTTTET) the composition is skewed to low complexity. The span at 4529–4539 (VETKQMEEKSS) shows a compositional bias: basic and acidic residues. Over residues 4540-4560 (FESVSTSVTKSTVLSSQSTVQ) the composition is skewed to low complexity. Basic and acidic residues-rich tracts occupy residues 4575–4584 (KVEDSSRRES) and 4639–4650 (SNKEIKDARETK). Low complexity-rich tracts occupy residues 4651 to 4662 (VTSQFTTTTSSA) and 4703 to 4714 (TTASAVSSTSAS). Residues 4744–4754 (PEDEEPADDVD) are compositionally biased toward acidic residues. Composition is skewed to basic and acidic residues over residues 4755 to 4764 (ERSSVKESRS) and 4788 to 4798 (LVEEEHEHVEE). Positions 4804-4829 (TSTSKTTTLLQSSEQSSTTTSSTSKT) are enriched in low complexity. Residues 4835–4851 (ESITLTQMDQQTSQSQG) are compositionally biased toward polar residues. Over residues 4875-4905 (GSAGSVIGAGAGAVAAGGKCESSAASIVSSS) the composition is skewed to low complexity. The segment covering 4915-4930 (GKSSPGALTSESQSIP) has biased composition (polar residues). Residue Ser-4950 is modified to Phosphoserine; by GSK3-beta. Basic and acidic residues predominate over residues 4955–4970 (VSKDELKSLEMQHHSQ). Residues 5101–5112 (SYELQHSSSGVS) show a composition bias toward polar residues. Residues 5185 to 5196 (SQSSESVESSSQ) show a composition bias toward low complexity.

Heterodimer of a heavy and a light chain. Interacts with Fmr1. Found in a complex with tubulin and Futsch. Post-translationally, several minor light chains can be created with markedly different pIs. In terms of processing, phosphorylated by SGG/GSK3. Phosphorylated by LRRK2 at the presynapse of neuromuscular junctions, which negatively regulates the activity controlling synaptic differentiation. In terms of tissue distribution, neuronal cells within the PNS and CNS.

Its subcellular location is the cytoplasm. It is found in the cytoskeleton. During embryogenesis, necessary for dendritic and axonal organization and growth at the neuromuscular junction through the regulation of the synaptic microtubule cytoskeleton. Microtubule hairpin loops are found within a small subset of synaptic boutons at the neuromuscular synapse, these loops are stabilized by futsch. Loop morphology and dynamics suggest that rearrangement of these microtubule-based loops is a critical component of the process of bouton division and for subsequent nerve-terminal growth and branching. Translation is repressed by Fmr1. Together with ringer, required for neuromuscular junction (NMJ) bouton growth by regulating synaptic microtubules. Function with ringer in maintaining microtubule stability and dynamics, is essential for promoting axon regeneration in response to peripheral (PNS) and central nervous system (CNS) injury. In response to axotomy, acts downstream of a stress response cascade involving Xbp1 splicing, to control axon regeneration. In Drosophila melanogaster (Fruit fly), this protein is Microtubule-associated protein futsch (futsch).